A 314-amino-acid chain; its full sequence is Olfactory receptor 1E16 (314 aa).

Topologically, residues 1 to 29 (MTERNKTVISQFLLLGLPIPPEHQQLFYA) are extracellular. Asn5 carries an N-linked (GlcNAc...) asparagine glycan. The chain crosses the membrane as a helical span at residues 30–50 (LFLVMYLTTVLGNLIIIILII). Topologically, residues 51–57 (LDSHLHT) are cytoplasmic. Residues 58–78 (PMYLFLSNLSFSDLCFSSVTM) traverse the membrane as a helical segment. The Extracellular portion of the chain corresponds to 79-97 (PKLLQNMQSQVPSIPYAGC). The cysteines at positions 97 and 179 are disulfide-linked. A helical membrane pass occupies residues 98-118 (LAQIYFFLFFGDLGNFLLVAM). Residues 119–143 (AYDRYVAICYPLHYTTIMSPRLCVS) lie on the Cytoplasmic side of the membrane. A helical transmembrane segment spans residues 144-164 (LVVLSWVLTTFHAMLHTLLMA). Residues 165–196 (RLSFCEDNVIPHYFCDMSALLKLACSDTRVNE) are Extracellular-facing. Residues 197–217 (VVIFIVASIFLVLPFALITMS) traverse the membrane as a helical segment. At 218-239 (YVRIVSSILKVPSSQGIYKAFS) the chain is on the cytoplasmic side. The chain crosses the membrane as a helical span at residues 240-260 (TCGSHLSVVSLFYGTVIGLYL). Residues 261–271 (SPSSNNSTVKD) are Extracellular-facing. N-linked (GlcNAc...) asparagine glycosylation is found at Asn265 and Asn266. Residues 272–292 (TVMSLMYTVVTPMLNPFIYSL) form a helical membrane-spanning segment. Topologically, residues 293–314 (RNRDIKGALERVFCKRKIQLNL) are cytoplasmic.

This sequence belongs to the G-protein coupled receptor 1 family. In terms of tissue distribution, olfactory epithelium.

It is found in the cell membrane. Its function is as follows. Odorant receptor. Activated by a lily-derived aldehyde as well as other odorants. May signal through an inositol 1,4,5-trisphosphate (IP3) second messenger system. This chain is Olfactory receptor 1E16, found in Mus musculus (Mouse).